We begin with the raw amino-acid sequence, 301 residues long: Tyrosine recombinase XerC (301 aa).

The 85-residue stretch at 1–85 (MELISLFKQY…ALRSFYRFLV (85 aa)) folds into the Core-binding (CB) domain. One can recognise a Tyr recombinase domain in the interval 106-292 (KLPHFFYEKE…TKEKLQESYR (187 aa)). Catalysis depends on residues Arg-147, Lys-171, His-244, Arg-247, and His-270. Tyr-279 functions as the O-(3'-phospho-DNA)-tyrosine intermediate in the catalytic mechanism.

Belongs to the 'phage' integrase family. XerC subfamily. In terms of assembly, forms a cyclic heterotetrameric complex composed of two molecules of XerC and two molecules of XerD.

The protein localises to the cytoplasm. Site-specific tyrosine recombinase, which acts by catalyzing the cutting and rejoining of the recombining DNA molecules. The XerC-XerD complex is essential to convert dimers of the bacterial chromosome into monomers to permit their segregation at cell division. It also contributes to the segregational stability of plasmids. This Pediococcus pentosaceus (strain ATCC 25745 / CCUG 21536 / LMG 10740 / 183-1w) protein is Tyrosine recombinase XerC.